The chain runs to 1000 residues: Lysine-specific histone demethylase 1 (1000 aa).

The segment at 104-123 is disordered; that stretch reads RRPAGRRGRPALNTSNSLER. A coiled-coil region spans residues 107–137; that stretch reads AGRRGRPALNTSNSLERNGTRYVSAEAPISV. Positions 153–249 constitute an SWIRM domain; that stretch reads CYESAIASNL…YGCIYIISSL (97 aa). Residues 260–302, E301, and 328–329 each bind FAD; these read VAII…IYEA and LA. The interval 279–950 is demethylase activity; that stretch reads LFAQYEQDFL…RCESQPIPED (672 aa). Residues 434-529 adopt a coiled-coil conformation; the sequence is IGWYISIEAF…ADMLNSLAST (96 aa). Positions 780–800 are disordered; the sequence is TYGTKRNAQQALGKEGERENK. A DNA-binding region (HMG box) is located at residues 841 to 921; it reads SRPSANPYLL…NYSTRLEEYQ (81 aa). 908–909 contributes to the FAD binding site; it reads AR. The segment covering 959-972 has biased composition (basic and acidic residues); sequence EQEDEHLHPEKEGM. Residues 959 to 1000 are disordered; sequence EQEDEHLHPEKEGMSVENSDDDYHDDLDYEDSISEVFPDNFS. The span at 976–991 shows a compositional bias: acidic residues; that stretch reads NSDDDYHDDLDYEDSI.

This sequence belongs to the flavin monoamine oxidase family. In terms of assembly, component of the SWM histone demethylase complex composed of at least lsd1, lsd2, phf1 and phf2. Interacts directly with lsd2. FAD is required as a cofactor.

The protein localises to the nucleus. Catalytic component of the SWM histone demethylase complex that specifically demethylates H3K9me2, a specific tag for epigenetic transcriptional activation, thereby acting as a corepressor. Acts by oxidizing the substrate by FAD to generate the corresponding imine that is subsequently hydrolyzed. Has a role in regulating heterochromatin propagation and euchromatic transcription. Also has a gene activating role. The sequence is that of Lysine-specific histone demethylase 1 (lsd1) from Schizosaccharomyces pombe (strain 972 / ATCC 24843) (Fission yeast).